A 363-amino-acid polypeptide reads, in one-letter code: Dihydroorotate dehydrogenase (quinone) (363 aa).

FMN-binding positions include 77–81 (AGMDK) and Thr101. Substrate is bound at residue Lys81. 126 to 130 (NRMGF) provides a ligand contact to substrate. The FMN site is built by Ser155 and Asn188. Substrate is bound at residue Asn188. Ser191 acts as the Nucleophile in catalysis. Residue Asn193 participates in substrate binding. 2 residues coordinate FMN: Lys234 and Thr262. A substrate-binding site is contributed by 263–264 (NT). Residues Gly287, Gly316, and 337–338 (YT) each bind FMN.

The protein belongs to the dihydroorotate dehydrogenase family. Type 2 subfamily. As to quaternary structure, monomer. FMN serves as cofactor.

The protein localises to the cell membrane. The enzyme catalyses (S)-dihydroorotate + a quinone = orotate + a quinol. Its pathway is pyrimidine metabolism; UMP biosynthesis via de novo pathway; orotate from (S)-dihydroorotate (quinone route): step 1/1. Its function is as follows. Catalyzes the conversion of dihydroorotate to orotate with quinone as electron acceptor. In Chloroflexus aurantiacus (strain ATCC 29366 / DSM 635 / J-10-fl), this protein is Dihydroorotate dehydrogenase (quinone).